Consider the following 358-residue polypeptide: UPF0421 protein BT9727_2513 (358 aa).

The next 4 helical transmembrane spans lie at 19–39, 74–94, 109–129, and 131–151; these read IAVF…IFAV, FTFF…FTIV, TLTA…AFLI, and LATT…ILPP.

The protein belongs to the UPF0421 family.

Its subcellular location is the cell membrane. The polypeptide is UPF0421 protein BT9727_2513 (Bacillus thuringiensis subsp. konkukian (strain 97-27)).